A 187-amino-acid polypeptide reads, in one-letter code: Potassium-transporting ATPase KdpC subunit (187 aa).

A helical transmembrane segment spans residues 11-31 (LILLMTVVTGALYPLAVTGIA).

The protein belongs to the KdpC family. As to quaternary structure, the system is composed of three essential subunits: KdpA, KdpB and KdpC.

The protein localises to the cell inner membrane. Part of the high-affinity ATP-driven potassium transport (or Kdp) system, which catalyzes the hydrolysis of ATP coupled with the electrogenic transport of potassium into the cytoplasm. This subunit acts as a catalytic chaperone that increases the ATP-binding affinity of the ATP-hydrolyzing subunit KdpB by the formation of a transient KdpB/KdpC/ATP ternary complex. This Pseudomonas entomophila (strain L48) protein is Potassium-transporting ATPase KdpC subunit.